The primary structure comprises 108 residues: Insulin (108 aa).

Positions 1–21 (MAVWLQAGALLVLLVVSSVST) are cleaved as a signal peptide. 3 disulfides stabilise this stretch: C30/C94, C42/C107, and C93/C98. A propeptide spans 54–84 (DVEPLLGFLPPKSAQETEVADFAFKDHAELI) (c peptide).

The protein belongs to the insulin family. As to quaternary structure, heterodimer of a B chain and an A chain linked by two disulfide bonds.

It is found in the secreted. Insulin decreases blood glucose concentration. It increases cell permeability to monosaccharides, amino acids and fatty acids. It accelerates glycolysis, the pentose phosphate cycle, and glycogen synthesis in liver. In Danio rerio (Zebrafish), this protein is Insulin (ins).